A 237-amino-acid chain; its full sequence is Ribonuclease PH (237 aa).

Phosphate is bound by residues Arg-86 and 124–126; that span reads GTR.

The protein belongs to the RNase PH family. As to quaternary structure, homohexameric ring arranged as a trimer of dimers.

The catalysed reaction is tRNA(n+1) + phosphate = tRNA(n) + a ribonucleoside 5'-diphosphate. Functionally, phosphorolytic 3'-5' exoribonuclease that plays an important role in tRNA 3'-end maturation. Removes nucleotide residues following the 3'-CCA terminus of tRNAs; can also add nucleotides to the ends of RNA molecules by using nucleoside diphosphates as substrates, but this may not be physiologically important. Probably plays a role in initiation of 16S rRNA degradation (leading to ribosome degradation) during starvation. This chain is Ribonuclease PH, found in Cereibacter sphaeroides (strain KD131 / KCTC 12085) (Rhodobacter sphaeroides).